The sequence spans 44 residues: Cuticle protein CP466 (44 aa).

A run of 2 repeats spans residues 3–20 (LLEG…KKYL) and 27–44 (VLLT…NVQF).

Calcified shell.

The protein is Cuticle protein CP466 of Cancer pagurus (Rock crab).